The following is a 423-amino-acid chain: UDP-N-acetylglucosamine 1-carboxyvinyltransferase 2 (423 aa).

Lys-23–Asn-24 is a binding site for phosphoenolpyruvate. A UDP-N-acetyl-alpha-D-glucosamine-binding site is contributed by Arg-96. Residue Cys-120 is the Proton donor of the active site. Cys-120 is subject to 2-(S-cysteinyl)pyruvic acid O-phosphothioketal. Residues Arg-125–Leu-129, Asp-309, and Val-331 contribute to the UDP-N-acetyl-alpha-D-glucosamine site.

The protein belongs to the EPSP synthase family. MurA subfamily.

It is found in the cytoplasm. The catalysed reaction is phosphoenolpyruvate + UDP-N-acetyl-alpha-D-glucosamine = UDP-N-acetyl-3-O-(1-carboxyvinyl)-alpha-D-glucosamine + phosphate. It participates in cell wall biogenesis; peptidoglycan biosynthesis. Functionally, cell wall formation. Adds enolpyruvyl to UDP-N-acetylglucosamine. In Streptococcus agalactiae serotype III (strain NEM316), this protein is UDP-N-acetylglucosamine 1-carboxyvinyltransferase 2.